A 230-amino-acid chain; its full sequence is Stachydrine N-demethylase reductase subunit Stc3 (230 aa).

This sequence belongs to the non-flavoprotein flavin reductase family. The system is probably composed of an oxygenase subunit (Stc2) and two reductase subunits (Stc3 and Stc4).

Its function is as follows. Reductase involved in the catabolism of stachydrine (L-proline betaine), a source of carbon and nitrogen. Part of a Rieske-type oxygenase system that catalyzes the demethylation of stachydrine to produce N-methyl-L-proline (monomethylproline). This subunit is probably involved in the transfer of electrons from NAD(P)H to the catalytic subunit Stc2. The polypeptide is Stachydrine N-demethylase reductase subunit Stc3 (Rhizobium meliloti (strain 1021) (Ensifer meliloti)).